We begin with the raw amino-acid sequence, 439 residues long: MNHKVGFVSLGCPKALVDSERIITQLKAQGYELVPTYEDAGVVVINTCGFIDSAVQESLDTIKEAMAENGRVIVTGCLGAKADVIKNACPDVLHISGAHAYEEVVNAVHQHLPPPADPFTQLIPPQGIKLTPRHYAYLKISEGCNQKCTFCIIPTMRGKLQSYPMAQILTEAKKLKQAGVKELLVISQDTSAYGVDTRYQQVEWQGKTVNTRFYDLCEQLGELGIWVRLHYVYPYPHVDDIVPLMRDGLILPYLDIPLQHANSRILKAMKRPASSENTLLRIASWREICPDITLRSTFIVGFPGETEEEFSELLAFLKEAQLDRVGCFKYSPVEGAKANDLDNPVSEDIKEERYHRFMQVQAEISRNKLKNKIGSTQTVLIDEITEDQIIARSKSDAPEIDGLVYLPKISGITVGSFAEAMITDSDDYDLYGDLEYSLA.

Residues 3 to 113 (HKVGFVSLGC…VVNAVHQHLP (111 aa)) form the MTTase N-terminal domain. [4Fe-4S] cluster is bound by residues Cys-12, Cys-48, Cys-77, Cys-144, Cys-148, and Cys-151. Positions 130–367 (LTPRHYAYLK…MQVQAEISRN (238 aa)) constitute a Radical SAM core domain. The region spanning 370-436 (KNKIGSTQTV…DYDLYGDLEY (67 aa)) is the TRAM domain.

It belongs to the methylthiotransferase family. RimO subfamily. It depends on [4Fe-4S] cluster as a cofactor.

The protein resides in the cytoplasm. The catalysed reaction is L-aspartate(89)-[ribosomal protein uS12]-hydrogen + (sulfur carrier)-SH + AH2 + 2 S-adenosyl-L-methionine = 3-methylsulfanyl-L-aspartate(89)-[ribosomal protein uS12]-hydrogen + (sulfur carrier)-H + 5'-deoxyadenosine + L-methionine + A + S-adenosyl-L-homocysteine + 2 H(+). Catalyzes the methylthiolation of an aspartic acid residue of ribosomal protein uS12. The polypeptide is Ribosomal protein uS12 methylthiotransferase RimO (Legionella pneumophila (strain Corby)).